Reading from the N-terminus, the 511-residue chain is MEKFEGYSEKLKFPRQYFVYPLLFQEYIYVFAHDYGLNGSELVEIIGSNNKKFSSLLVKRLMIRMYQQNFWINLVNHPNQDRLLDYNNFFYSEFYSQILSEGFAIVVEIPFSLREQSCPEEKEIPKFQNLRSIHSIFPFLEDKFLHLHYLAHIEIPYPIHLDILLQLLQYRIQDVPSLHLLRFFLNYYSNWNSFITSMKSIFILKKENKRLFRFLYNSYVSEYEFFLLFLRKQSSCLRLTSSGTFLERIIFSRKMEHFGLMYPAFFRKTIWFVMDPLMHYVRYQGKAILASKGTLLLKKKWKCYLVRLWQYSFSFWTQPQRIHLNQLENSCFDFLGYFSSVPINSLLVRNQMLENSFLIDTQMKKFDTKVPVTPLIGSLAKAQFCTGSGHPISKPIWTDLSDWDILDRFGRICRNLFHYYSGSSKKKTLYRLKYILRLSCARTLARKHKSTVRAFMQWLGSVFLEEFFTEEEQVFSLMFAKTTYFSFRGSHSERIWYLDILRINDLVNPLN.

It belongs to the intron maturase 2 family. MatK subfamily.

Its subcellular location is the plastid. It is found in the chloroplast. Functionally, usually encoded in the trnK tRNA gene intron. Probably assists in splicing its own and other chloroplast group II introns. This Oryza nivara (Indian wild rice) protein is Maturase K.